The following is an 85-amino-acid chain: UPF0181 protein YE1782 (85 aa).

Disordered stretches follow at residues 1–22 and 57–85; these read MLAG…RIHQ and DTDF…PYEG. A compositionally biased stretch (basic and acidic residues) spans 9–21; sequence SHEEQQEAVERIH. Residues 74–85 show a composition bias toward acidic residues; the sequence is QDADEIEDPYEG.

This sequence belongs to the UPF0181 family.

The sequence is that of UPF0181 protein YE1782 from Yersinia enterocolitica serotype O:8 / biotype 1B (strain NCTC 13174 / 8081).